The chain runs to 2871 residues: Desmoplakin (2871 aa).

An interaction with PKP1, JUP, PKP2 region spans residues 1–584 (MSCNGGSHPR…DYMKTIADLE (584 aa)). The segment at 1–1056 (MSCNGGSHPR…ANSENCNKNK (1056 aa)) is globular 1. 2 positions are modified to phosphoserine: serine 22 and serine 53. Position 56 is a phosphotyrosine (tyrosine 56). Threonine 61 is subject to Phosphothreonine. Serine 165, serine 166, and serine 176 each carry phosphoserine. Spectrin repeat units lie at residues 178–271 (SGWD…HLRQ) and 272–375 (LQNI…LKEN). One copy of the Spectrin 3a repeat lies at 376 to 446 (AAYFQFFEEA…NLVNKSKKIV (71 aa)). One can recognise an SH3 domain in the interval 458–515 (NKPIILRALCDYKQDQKIVHKGDECILKDNNERSKWYVTGPGGVDMLVPSVGLIIPPP). Residues 516 to 545 (NPLAVDLSCKIEQYYEAILALWNQLYINMK) form a Spectrin 3b repeat. Spectrin repeat units lie at residues 546-627 (SLVS…IQLP), 654-769 (VIET…SLCT), and 770-883 (VRAL…DLEK). Positions 1018-1945 (SEMLKSLEDL…QREIDKLRQR (928 aa)) form a coiled coil. The central fibrous rod domain stretch occupies residues 1057-1945 (FLDQNLQKYQ…QREIDKLRQR (889 aa)). Phosphoserine occurs at positions 1658, 1708, and 2024. Positions 1946–2871 (PYGSHRETQT…YSFSSSSIGH (926 aa)) are globular 2. The 4.5 X 38 AA tandem repeats (Domain A) stretch occupies residues 1960–2208 (TVDTSKLVFD…LLLSVQKRSM (249 aa)). 17 Plectin repeats span residues 2009–2045 (QPFL…PEST), 2046–2083 (VMLL…FDDR), 2084–2121 (QQIY…RETG), 2122–2159 (MRLL…RDLY), 2163–2197 (NDPR…PHTG), 2198–2233 (LLLL…PSTV), 2251–2288 (KDFL…PGTA), 2289–2326 (LELL…IEFK), 2327–2364 (EKLL…KGHG), 2365–2402 (IRLL…EELS), 2406–2440 (SDPS…EETG), 2456–2493 (SQKN…YETF), 2507–2544 (TITG…RKFF), 2610–2647 (SDTL…SITG), 2648–2685 (QRLL…QDMA), 2724–2761 (QRFL…GRAA), and 2762–2799 (QRLQ…DITG). Phosphoserine occurs at positions 2207, 2209, and 2225. The tract at residues 2244 to 2446 (DEVGERIKDF…EETGLCLLPL (203 aa)) is 4.5 X 38 AA tandem repeats (Domain B). The 4.5 X 38 AA tandem repeats (Domain C) stretch occupies residues 2609–2822 (FSDTLEESSP…LPSPYNMSSA (214 aa)). Phosphoserine is present on residues serine 2810 and serine 2815. The segment covering 2810 to 2823 (SKGLPSPYNMSSAP) has biased composition (polar residues). The disordered stretch occupies residues 2810-2871 (SKGLPSPYNM…YSFSSSSIGH (62 aa)). A Phosphotyrosine modification is found at tyrosine 2817. Serine 2820, serine 2821, and serine 2825 each carry phosphoserine. The 6 X 4 AA tandem repeats of G-S-R-[SR] stretch occupies residues 2824–2847 (GSRSGSRSGSRSGSRSGSRSGSRR). Residues 2824–2847 (GSRSGSRSGSRSGSRSGSRSGSRR) show a composition bias toward low complexity. Arginine 2826 and arginine 2847 each carry omega-N-methylarginine. A Phosphoserine modification is found at serine 2849. At threonine 2853 the chain carries Phosphothreonine. Positions 2856-2871 (SSYSYSYSFSSSSIGH) are enriched in low complexity. Residue serine 2868 is modified to Phosphoserine.

This sequence belongs to the plakin or cytolinker family. Homodimer. Interacts with COL17A1 (via cytoplasmic region). Interacts with DSC2. Interacts with PKP2. Interacts with PKP1. Interacts weakly with TMEM65. Phosphorylation at Ser-2849 increases association with intermediate filament cytokeratin, potentially facilitating interaction between desmosome junctions and intermediate filament architecture. As to expression, expressed in oral mucosa (at protein level). Expressed in arrector pili muscle (at protein level). Expressed in the heart in the heart (at protein level). Apparently an obligate constituent of all desmosomes. In terms of tissue distribution, resides predominantly in tissues and cells of stratified origin.

The protein resides in the cell junction. It is found in the desmosome. The protein localises to the cell membrane. It localises to the cytoplasm. Its function is as follows. Major high molecular weight protein of desmosomes. Regulates profibrotic gene expression in cardiomyocytes via activation of the MAPK14/p38 MAPK signaling cascade and increase in TGFB1 protein abundance. The polypeptide is Desmoplakin (DSP) (Homo sapiens (Human)).